A 146-amino-acid polypeptide reads, in one-letter code: Acidic phospholipase A2 CM-II (146 aa).

Residues 1–21 form the signal peptide; the sequence is MNPAHLLILAAVCVSPLGAFS. Residues 22–27 constitute a propeptide that is removed on maturation; sequence NRPMPL. Intrachain disulfides connect Cys-38–Cys-98, Cys-53–Cys-145, Cys-55–Cys-71, Cys-70–Cys-126, Cys-77–Cys-119, Cys-87–Cys-112, and Cys-105–Cys-117. 3 residues coordinate Ca(2+): Tyr-54, Gly-56, and Gly-58. Residue His-74 is part of the active site. Ca(2+) is bound at residue Asp-75. Asp-120 is an active-site residue.

It belongs to the phospholipase A2 family. Group I subfamily. D49 sub-subfamily. Ca(2+) is required as a cofactor. Expressed by the venom gland.

It is found in the secreted. The catalysed reaction is a 1,2-diacyl-sn-glycero-3-phosphocholine + H2O = a 1-acyl-sn-glycero-3-phosphocholine + a fatty acid + H(+). Its function is as follows. PLA2 catalyzes the calcium-dependent hydrolysis of the 2-acyl groups in 3-sn-phosphoglycerides. Is able to suppress the acetylcholine (ACh)-evoked current mediated by alpha-7 (CHRNA7)-similar nAChRs in L.stagnalis neurons (IC(50)=37 nM) and to compete with alpha-bungarotoxin for binding to muscle- and alpha-7 neuronal nAChR types, as well as to AChBPs. In inhibition of alpha-bungarotoxin binding, this toxin is similarly active against T.californica nAChR (IC(50)=1.2 uM), human alpha-7 nAChR (IC(50)=3.2 uM), and L.stagnalis AChBP (IC(50)=1.0 uM), whereas it is not active against A.californica AChBP (IC(50)&gt;100 uM). The polypeptide is Acidic phospholipase A2 CM-II (Naja kaouthia (Monocled cobra)).